We begin with the raw amino-acid sequence, 344 residues long: Cysteine proteinase 5 (344 aa).

An N-terminal signal peptide occupies residues 1–17 (MKVLSFLCVLLVSVATA). Residues 18–111 (KQQFSELQYR…TQEEKVFTTS (94 aa)) constitute a propeptide, activation peptide. 3 disulfide bridges follow: C133-C174, C167-C207, and C265-C333. The active site involves C136. The active site involves H272. An N-linked (GlcNAc...) asparagine glycan is attached at N297. N311 is a catalytic residue.

Belongs to the peptidase C1 family. Post-translationally, glycosylated; contains GlcNAc-alpha-1-P-Ser residues.

It is found in the lysosome. This chain is Cysteine proteinase 5 (cprE), found in Dictyostelium discoideum (Social amoeba).